The following is a 940-amino-acid chain: Isoleucine--tRNA ligase (940 aa).

Residues 59–69 (PYANGDIHIGH) carry the 'HIGH' region motif. Glutamate 563 is an L-isoleucyl-5'-AMP binding site. The short motif at 604–608 (KMSKS) is the 'KMSKS' region element. An ATP-binding site is contributed by lysine 607. Residues cysteine 903, cysteine 906, cysteine 923, and cysteine 926 each contribute to the Zn(2+) site.

This sequence belongs to the class-I aminoacyl-tRNA synthetase family. IleS type 1 subfamily. As to quaternary structure, monomer. Zn(2+) is required as a cofactor.

The protein localises to the cytoplasm. The enzyme catalyses tRNA(Ile) + L-isoleucine + ATP = L-isoleucyl-tRNA(Ile) + AMP + diphosphate. In terms of biological role, catalyzes the attachment of isoleucine to tRNA(Ile). As IleRS can inadvertently accommodate and process structurally similar amino acids such as valine, to avoid such errors it has two additional distinct tRNA(Ile)-dependent editing activities. One activity is designated as 'pretransfer' editing and involves the hydrolysis of activated Val-AMP. The other activity is designated 'posttransfer' editing and involves deacylation of mischarged Val-tRNA(Ile). In Wigglesworthia glossinidia brevipalpis, this protein is Isoleucine--tRNA ligase.